The primary structure comprises 127 residues: Small ribosomal subunit protein uS11 (127 aa).

Belongs to the universal ribosomal protein uS11 family. Part of the 30S ribosomal subunit. Interacts with proteins S7 and S18. Binds to IF-3.

Functionally, located on the platform of the 30S subunit, it bridges several disparate RNA helices of the 16S rRNA. Forms part of the Shine-Dalgarno cleft in the 70S ribosome. The chain is Small ribosomal subunit protein uS11 from Ruthia magnifica subsp. Calyptogena magnifica.